A 122-amino-acid chain; its full sequence is Prefoldin subunit 1 (122 aa).

Alanine 2 carries the post-translational modification N-acetylalanine.

This sequence belongs to the prefoldin subunit beta family. As to quaternary structure, heterohexamer of two PFD-alpha type and four PFD-beta type subunits.

Binds specifically to cytosolic chaperonin (c-CPN) and transfers target proteins to it. Binds to nascent polypeptide chain and promotes folding in an environment in which there are many competing pathways for nonnative proteins. The protein is Prefoldin subunit 1 (PFDN1) of Homo sapiens (Human).